The sequence spans 398 residues: Elongation factor Tu (398 aa).

Residues lysine 10 to glutamate 207 form the tr-type G domain. The segment at glycine 19–threonine 26 is G1. Glycine 19 to threonine 26 serves as a coordination point for GTP. Mg(2+) is bound at residue threonine 26. Residues glycine 63–asparagine 67 form a G2 region. The segment at aspartate 84 to glycine 87 is G3. GTP is bound by residues aspartate 84–histidine 88 and asparagine 139–aspartate 142. The interval asparagine 139 to aspartate 142 is G4. The segment at serine 177 to leucine 179 is G5.

The protein belongs to the TRAFAC class translation factor GTPase superfamily. Classic translation factor GTPase family. EF-Tu/EF-1A subfamily. In terms of assembly, monomer.

It localises to the cytoplasm. The enzyme catalyses GTP + H2O = GDP + phosphate + H(+). Its function is as follows. GTP hydrolase that promotes the GTP-dependent binding of aminoacyl-tRNA to the A-site of ribosomes during protein biosynthesis. In Streptococcus pyogenes serotype M49 (strain NZ131), this protein is Elongation factor Tu.